Here is a 309-residue protein sequence, read N- to C-terminus: Taste receptor type 2 member 31 (309 aa).

Topologically, residues 1 to 2 (MT) are extracellular. A helical transmembrane segment spans residues 3–23 (TFLPIIFSSLVVVIFVIGNFA). The Cytoplasmic portion of the chain corresponds to 24–55 (NGFIALVNSIEWFKXQKISFADQILTALAVSR). The chain crosses the membrane as a helical span at residues 56–76 (VGLLWVLLLNWYSTVLNPAFY). Residues 77–100 (SVEVRTTAYNVWAVTGHFSNWLAT) are Extracellular-facing. The chain crosses the membrane as a helical span at residues 101-121 (SLSIFYLLKIANFSNFIFLHL). Residues 122 to 126 (KRRVK) are Cytoplasmic-facing. Residues 127 to 147 (SVILVMLLGPLLFLACQLFMI) form a helical membrane-spanning segment. Residues 148–181 (NMKEIVRTKEYEGNMTWKIKLRSAVYLSDATVTT) are Extracellular-facing. Asparagine 161 carries N-linked (GlcNAc...) asparagine glycosylation. Residues 182–202 (LGNLVPFTLTLLCFLLLICSL) form a helical membrane-spanning segment. Residues 203-229 (CKHLKKMQLHGKGSQDPSTKVHIKVLQ) are Cytoplasmic-facing. Residues 230 to 250 (TVISFLLLCAIYFLSIMISVW) form a helical membrane-spanning segment. Residues 251-259 (SFGSLKNKP) lie on the Extracellular side of the membrane. The chain crosses the membrane as a helical span at residues 260-280 (VFMFCKAIRFSYPSIHPFILI). Residues 281 to 309 (WGNKKLKQTFLSVLRQVRYWVKGEKPSSP) are Cytoplasmic-facing.

It belongs to the G-protein coupled receptor T2R family.

Its subcellular location is the membrane. In terms of biological role, receptor that may play a role in the perception of bitterness and is gustducin-linked. May play a role in sensing the chemical composition of the gastrointestinal content. The activity of this receptor may stimulate alpha gustducin, mediate PLC-beta-2 activation and lead to the gating of TRPM5. The polypeptide is Taste receptor type 2 member 31 (TAS2R31) (Pan paniscus (Pygmy chimpanzee)).